The following is a 58-amino-acid chain: Small ribosomal subunit protein bS21 (58 aa).

Residues 32 to 42 (IRKREHYEKPS) are compositionally biased toward basic and acidic residues. The interval 32-58 (IRKREHYEKPSVRRKKKSEAARKRKFN) is disordered. Positions 43-58 (VRRKKKSEAARKRKFN) are enriched in basic residues.

This sequence belongs to the bacterial ribosomal protein bS21 family.

In Lachnospira eligens (strain ATCC 27750 / DSM 3376 / VPI C15-48 / C15-B4) (Eubacterium eligens), this protein is Small ribosomal subunit protein bS21.